Consider the following 496-residue polypeptide: Sporulation-killing factor biosynthesis protein SkfC (496 aa).

Helical transmembrane passes span 1–21 (MNSLSLVFWSILAVVGLLLFI), 224–244 (VSGMLGSALAMILAILILVFM), 248–268 (TSIIFSLVLGLLIIICQSLTL), 291–311 (LLGILSTLLTGLLTGFVVFIC), 331–351 (IVQIFYGIGAGLISLGVTSLL), 399–419 (LLMIPVIWWMSGNILISIIVS), and 443–463 (FIFGCFLGVLFIKFGFICVLV).

The protein localises to the membrane. In terms of biological role, required for production of the bacteriocin SkfA. The sequence is that of Sporulation-killing factor biosynthesis protein SkfC from Bacillus subtilis (strain 168).